The primary structure comprises 1104 residues: Isoleucine--tRNA ligase (1104 aa).

Positions 48-58 (PYTTGRIHLGT) match the 'HIGH' region motif. Positions 644 to 648 (KMSKS) match the 'KMSKS' region motif. Position 647 (Lys647) interacts with ATP.

It belongs to the class-I aminoacyl-tRNA synthetase family. IleS type 2 subfamily. In terms of assembly, monomer. Zn(2+) serves as cofactor.

It is found in the cytoplasm. The catalysed reaction is tRNA(Ile) + L-isoleucine + ATP = L-isoleucyl-tRNA(Ile) + AMP + diphosphate. Catalyzes the attachment of isoleucine to tRNA(Ile). As IleRS can inadvertently accommodate and process structurally similar amino acids such as valine, to avoid such errors it has two additional distinct tRNA(Ile)-dependent editing activities. One activity is designated as 'pretransfer' editing and involves the hydrolysis of activated Val-AMP. The other activity is designated 'posttransfer' editing and involves deacylation of mischarged Val-tRNA(Ile). In Methanocella arvoryzae (strain DSM 22066 / NBRC 105507 / MRE50), this protein is Isoleucine--tRNA ligase.